A 273-amino-acid chain; its full sequence is Type II restriction enzyme HgiCII (273 aa).

Belongs to the TdeIII type II restriction endonuclease family.

It carries out the reaction Endonucleolytic cleavage of DNA to give specific double-stranded fragments with terminal 5'-phosphates.. A P subtype restriction enzyme that recognizes the double-stranded sequence 5'-GGWCC-3' and cleaves after G-1. This chain is Type II restriction enzyme HgiCII, found in Herpetosiphon aurantiacus (Herpetosiphon giganteus).